The sequence spans 986 residues: Probable ATP-dependent RNA helicase ddx42 (986 aa).

Disordered regions lie at residues 1-149, 165-192, and 206-252; these read MSKR…DEDD, AAID…DIDN, and QLAN…IEPL. Residues 29–82 show a composition bias toward low complexity; the sequence is SNINNNNNSNNNNNNNNNNNNNNNNNNNKNNIGTGINLNIKNNNNINNNNNKSG. Residues 105–117 are compositionally biased toward polar residues; that stretch reads PPKSSMTTLNKSP. Positions 119–137 are enriched in low complexity; that stretch reads NFENASSNNNNNNNNNNQE. Acidic residues predominate over residues 217-236; sequence DDDVDYSSLDDDDGYFDDEE. The Q motif signature appears at 305-333; the sequence is TSFGHYGFDDILLQAIAKQSIETPTPIQK. The 176-residue stretch at 336-511 folds into the Helicase ATP-binding domain; it reads IPIALSGRDL…RTILSDPIKI (176 aa). 349–356 lines the ATP pocket; it reads AKTGSGKT. Residues 459-462 carry the DEAD box motif; that stretch reads DEAD. A Helicase C-terminal domain is found at 522 to 684; that stretch reads DITQIVQVLK…FVPPELIDVA (163 aa). A disordered region spans residues 688–986; that stretch reads PHFKRERGGG…FNQRSQYNRR (299 aa). Gly residues predominate over residues 696 to 723; that stretch reads GGGGGSNRGRGRGGGGVGYRRNSRGGGV. 2 stretches are compositionally biased toward low complexity: residues 753 to 764 and 771 to 978; these read NPNNTDNSEINN and NNEN…NNFN.

Belongs to the DEAD box helicase family. DDX42 subfamily.

The protein localises to the nucleus. It catalyses the reaction ATP + H2O = ADP + phosphate + H(+). In terms of biological role, probable ATP-dependent RNA helicase which may bind to partially double-stranded RNAs (dsRNAs) in order to unwind RNA secondary structures. The chain is Probable ATP-dependent RNA helicase ddx42 (ddx42) from Dictyostelium discoideum (Social amoeba).